The chain runs to 227 residues: Cytochrome c oxidase subunit 2 (227 aa).

Residues Met1–Ser14 are Mitochondrial intermembrane-facing. The chain crosses the membrane as a helical span at residues Pro15–Met45. The Mitochondrial matrix segment spans residues Leu46–Gln59. Residues Glu60 to Met87 traverse the membrane as a helical segment. At Asp88–Ile227 the chain is on the mitochondrial intermembrane side. Residues His161, Cys196, Glu198, Cys200, His204, and Met207 each contribute to the Cu cation site. Mg(2+) is bound at residue Glu198.

The protein belongs to the cytochrome c oxidase subunit 2 family. As to quaternary structure, component of the cytochrome c oxidase (complex IV, CIV), a multisubunit enzyme composed of 14 subunits. The complex is composed of a catalytic core of 3 subunits MT-CO1, MT-CO2 and MT-CO3, encoded in the mitochondrial DNA, and 11 supernumerary subunits COX4I, COX5A, COX5B, COX6A, COX6B, COX6C, COX7A, COX7B, COX7C, COX8 and NDUFA4, which are encoded in the nuclear genome. The complex exists as a monomer or a dimer and forms supercomplexes (SCs) in the inner mitochondrial membrane with NADH-ubiquinone oxidoreductase (complex I, CI) and ubiquinol-cytochrome c oxidoreductase (cytochrome b-c1 complex, complex III, CIII), resulting in different assemblies (supercomplex SCI(1)III(2)IV(1) and megacomplex MCI(2)III(2)IV(2)). Found in a complex with TMEM177, COA6, COX18, COX20, SCO1 and SCO2. Interacts with TMEM177 in a COX20-dependent manner. Interacts with COX20. Interacts with COX16. The cofactor is Cu cation.

The protein localises to the mitochondrion inner membrane. It carries out the reaction 4 Fe(II)-[cytochrome c] + O2 + 8 H(+)(in) = 4 Fe(III)-[cytochrome c] + 2 H2O + 4 H(+)(out). Functionally, component of the cytochrome c oxidase, the last enzyme in the mitochondrial electron transport chain which drives oxidative phosphorylation. The respiratory chain contains 3 multisubunit complexes succinate dehydrogenase (complex II, CII), ubiquinol-cytochrome c oxidoreductase (cytochrome b-c1 complex, complex III, CIII) and cytochrome c oxidase (complex IV, CIV), that cooperate to transfer electrons derived from NADH and succinate to molecular oxygen, creating an electrochemical gradient over the inner membrane that drives transmembrane transport and the ATP synthase. Cytochrome c oxidase is the component of the respiratory chain that catalyzes the reduction of oxygen to water. Electrons originating from reduced cytochrome c in the intermembrane space (IMS) are transferred via the dinuclear copper A center (CU(A)) of subunit 2 and heme A of subunit 1 to the active site in subunit 1, a binuclear center (BNC) formed by heme A3 and copper B (CU(B)). The BNC reduces molecular oxygen to 2 water molecules using 4 electrons from cytochrome c in the IMS and 4 protons from the mitochondrial matrix. The polypeptide is Cytochrome c oxidase subunit 2 (MT-CO2) (Batomys granti (Luzon hairy-tailed rat)).